A 205-amino-acid polypeptide reads, in one-letter code: Urease accessory protein UreG (205 aa).

14 to 21 provides a ligand contact to GTP; it reads GPVGSGKT.

Belongs to the SIMIBI class G3E GTPase family. UreG subfamily. Homodimer. UreD, UreF and UreG form a complex that acts as a GTP-hydrolysis-dependent molecular chaperone, activating the urease apoprotein by helping to assemble the nickel containing metallocenter of UreC. The UreE protein probably delivers the nickel.

The protein resides in the cytoplasm. Functionally, facilitates the functional incorporation of the urease nickel metallocenter. This process requires GTP hydrolysis, probably effectuated by UreG. The polypeptide is Urease accessory protein UreG (Citrobacter koseri (strain ATCC BAA-895 / CDC 4225-83 / SGSC4696)).